The following is a 238-amino-acid chain: Transcription factor MYB27 (238 aa).

HTH myb-type domains are found at residues 6–58 (EETL…MNYL) and 59–113 (NPTL…RKKQ). The Nuclear localization signal motif lies at 31–38 (ERRWDSLA). DNA-binding regions (H-T-H motif) lie at residues 34–58 (WDSLAIVSGLKRSGKSCRLRWMNYL) and 86–109 (WSKIARRLPGRTDNEIKNYWRTHY).

Its subcellular location is the nucleus. The sequence is that of Transcription factor MYB27 from Arabidopsis thaliana (Mouse-ear cress).